We begin with the raw amino-acid sequence, 333 residues long: Trans-1,2-dihydrobenzene-1,2-diol dehydrogenase (333 aa).

Belongs to the Gfo/Idh/MocA family. As to quaternary structure, homodimer.

It carries out the reaction (1R,2R)-1,2-dihydrobenzene-1,2-diol + NADP(+) = catechol + NADPH + H(+). The enzyme catalyses D-xylose + NADP(+) = D-xylono-1,5-lactone + NADPH + H(+). This Mus musculus (Mouse) protein is Trans-1,2-dihydrobenzene-1,2-diol dehydrogenase (Dhdh).